The chain runs to 158 residues: Dysbindin domain-containing protein 2 (158 aa).

The segment at 79–158 is disordered; it reads FLPCEESSPA…DGGAEPGPCS (80 aa). The segment covering 106 to 131 has biased composition (low complexity); that stretch reads PTSDRTTSRTSSLSSDSSNLRSPNPS. 2 positions are modified to phosphoserine: serine 119 and serine 120. The residue at position 137 (threonine 137) is a Phosphothreonine. Residue serine 142 is modified to Phosphoserine. A compositionally biased stretch (acidic residues) spans 142 to 151; that stretch reads SDEEDGDDGG.

Belongs to the dysbindin family. Monomer. Interacts with CSNK1D and CSNK1E.

May modulate the activity of casein kinase-1. Inhibits CSNK1D autophosphorylation (in vitro). The polypeptide is Dysbindin domain-containing protein 2 (Dbndd2) (Mus musculus (Mouse)).